The sequence spans 298 residues: Max-like protein X (298 aa).

A disordered region spans residues 1-63 (MTEPGASPED…PRGCREDSSH (63 aa)). Ser7 carries the post-translational modification Phosphoserine. Residues 28–37 (GRARARRGAG) are compositionally biased toward basic residues. Phosphoserine occurs at positions 45, 48, 74, 77, and 98. The segment at 91-145 (SVVSRANSIGSTSASSVPNTDDEDSDYHQEAYKESYKDRRRRAHTQAEQKRRDAI) is disordered. A compositionally biased stretch (polar residues) spans 94 to 109 (SRANSIGSTSASSVPN). Composition is skewed to basic and acidic residues over residues 116–127 (DYHQEAYKESYK) and 135–145 (TQAEQKRRDAI). Residues 129–187 (RRRRAHTQAEQKRRDAIKRGYDDLQTIVPTCQQQDFSIGSQKLSKAIVLQKTIDYIQFL) enclose the bHLH domain. A leucine-zipper region spans residues 140-160 (KRRDAIKRGYDDLQTIVPTCQ).

Efficient DNA binding requires dimerization with another bHLH protein. Binds DNA as a heterodimer with MAD1, MAD4, MNT, WBSCR14 and MLXIP. Can also bind DNA as a homodimer. As to expression, expressed in all tissues tested, including spleen, thymus, prostate, ovary, intestine, colon, peripheral blood leukocyte, heart, liver, skeletal muscle and kidney. Lower levels of expression in testis, brain, placenta and lung.

It localises to the cytoplasm. The protein resides in the nucleus. Functionally, transcription regulator. Forms a sequence-specific DNA-binding protein complex with MAD1, MAD4, MNT, WBSCR14 and MLXIP which recognizes the core sequence 5'-CACGTG-3'. The TCFL4-MAD1, TCFL4-MAD4, TCFL4-WBSCR14 complexes are transcriptional repressors. Plays a role in transcriptional activation of glycolytic target genes. Involved in glucose-responsive gene regulation. The polypeptide is Max-like protein X (MLX) (Homo sapiens (Human)).